Reading from the N-terminus, the 197-residue chain is Zinc finger protein 581 (197 aa).

Positions 1–10 (MLVLPSPCPQ) are enriched in pro residues. The disordered stretch occupies residues 1–52 (MLVLPSPCPQPLAFSSVETMEGPPRRTCRSPEPGPSSSIGSPQASSPPRPNH). Low complexity predominate over residues 35-44 (PSSSIGSPQA). C2H2-type zinc fingers lie at residues 87–109 (YSCPVCSRVFEYMSYLQRHSITH), 115–137 (FECDICGKAFKRASHLARHHSIH), 145–167 (HGCPLCPRRFRDAGELAQHSRVH), and 173–196 (FQCPHCPRRFMEQNTLQKHTRWKH).

The protein localises to the nucleus. Its function is as follows. May be involved in transcriptional regulation. This chain is Zinc finger protein 581 (ZNF581), found in Homo sapiens (Human).